Consider the following 374-residue polypeptide: Type II methyltransferase M.BbvI (374 aa).

The region spanning 3-347 (FRKGELFCGP…EAVLKTFARI (345 aa)) is the SAM-dependent MTase C5-type domain. The active site involves cysteine 92.

It belongs to the class I-like SAM-binding methyltransferase superfamily. C5-methyltransferase family.

It catalyses the reaction a 2'-deoxycytidine in DNA + S-adenosyl-L-methionine = a 5-methyl-2'-deoxycytidine in DNA + S-adenosyl-L-homocysteine + H(+). Functionally, a methylase, recognizes the double-stranded sequence 5'-GCAGC-3', methylates C-2 on both strands, and protects the DNA from cleavage by the BbvI endonuclease. In Brevibacillus brevis (Bacillus brevis), this protein is Type II methyltransferase M.BbvI (bbvIM).